We begin with the raw amino-acid sequence, 355 residues long: Lipopolysaccharide heptosyltransferase 1 (355 aa).

Residues Thr-186, Thr-187, Lys-191, Glu-221, Asp-260, Thr-261, Gly-262, and His-265 each coordinate ADP-L-glycero-beta-D-manno-heptose.

The protein belongs to the glycosyltransferase 9 family.

The protein resides in the cell inner membrane. The catalysed reaction is an alpha-Kdo-(2-&gt;4)-alpha-Kdo-(2-&gt;6)-lipid A + ADP-L-glycero-beta-D-manno-heptose = an L-alpha-D-Hep-(1-&gt;5)-[alpha-Kdo-(2-&gt;4)]-alpha-Kdo-(2-&gt;6)-lipid A + ADP + H(+). It functions in the pathway bacterial outer membrane biogenesis; LPS core biosynthesis. In terms of biological role, glycosyltransferase involved in the biosynthesis of the core oligosaccharide region of lipopolysaccharide (LPS). Catalyzes the addition of the first heptose unit to one 3-deoxy-D-manno-octulosonic acid (Kdo) residue of the Kdo2-lipid A module. The sequence is that of Lipopolysaccharide heptosyltransferase 1 from Pseudomonas aeruginosa (strain ATCC 15692 / DSM 22644 / CIP 104116 / JCM 14847 / LMG 12228 / 1C / PRS 101 / PAO1).